A 322-amino-acid polypeptide reads, in one-letter code: Epoxide hydrolase A (322 aa).

Positions 27–131 (PVVILAHGFP…AVAALSVPAL (105 aa)) constitute an AB hydrolase-1 domain. The active-site Nucleophile is Asp103. His298 functions as the Proton acceptor in the catalytic mechanism.

The protein belongs to the AB hydrolase superfamily. Epoxide hydrolase family. In terms of assembly, homodimer.

The enzyme catalyses an epoxide + H2O = an ethanediol. In terms of biological role, could be involved in detoxification of extraneous host-cell epoxides. Catalyzes the hydrolysis of epoxide-containing substrates. The polypeptide is Epoxide hydrolase A (ephA) (Mycobacterium tuberculosis (strain ATCC 25618 / H37Rv)).